Consider the following 30-residue polypeptide: Cysteine-rich venom protein hematin (30 aa).

This sequence belongs to the CRISP family. Post-translationally, contains 8 disulfide bonds. Expressed by the venom gland.

It localises to the secreted. Inhibits calcium-activated potassium channels (KCa), voltage-gated potassium channel (Kv), and the calcium release channel/ryanodine receptor (RyR). In Hemachatus haemachatus (Rinkhals), this protein is Cysteine-rich venom protein hematin.